Consider the following 60-residue polypeptide: Toxin TdNa2 (60 aa).

The LCN-type CS-alpha/beta domain maps to R1–H59. 4 cysteine pairs are disulfide-bonded: C11–C58, C15–C37, C23–C42, and C27–C44.

It belongs to the long (4 C-C) scorpion toxin superfamily. Sodium channel inhibitor family. Beta subfamily. Expressed by the venom gland.

It localises to the secreted. Inhibits the sodium currents (Nav) in an apparent irreversible manner. Produces small depolarization and induces repetitive firing in squid axons. Is specific for arthropods (crickets, triatomides, crabs and squids), but is non-toxic to mice. The sequence is that of Toxin TdNa2 from Tityus discrepans (Venezuelan scorpion).